A 62-amino-acid polypeptide reads, in one-letter code: U-myrmeciitoxin(01)-Mg3a (62 aa).

Residues 1–24 (MKTTVILLLAIAIIFAIMTTLTSA) form the signal peptide.

As to expression, expressed by the venom gland.

It is found in the secreted. Functionally, may have antimicrobial properties, like most ant linear peptides. In Myrmecia gulosa (Red bulldog ant), this protein is U-myrmeciitoxin(01)-Mg3a.